The sequence spans 2570 residues: Highly reducing polyketide synthase tstA (2570 aa).

A Ketosynthase family 3 (KS3) domain is found at 16–443; the sequence is AMPIAVVGIG…GANAHVVLEN (428 aa). Residues C191, H326, and H366 each act as for beta-ketoacyl synthase activity in the active site. The interval 458-478 is disordered; it reads HTRKSATESSGTSTPSNPGPH. Low complexity predominate over residues 464 to 478; sequence TESSGTSTPSNPGPH. The region spanning 567 to 898 is the Malonyl-CoA:ACP transacylase (MAT) domain; it reads FVFTGQGAQW…YSALVRNKNA (332 aa). The interval 965–1103 is N-terminal hotdog fold; that stretch reads TDLLGVLERN…GLVSVVAPQK (139 aa). The region spanning 965–1293 is the PKS/mFAS DH domain; the sequence is TDLLGVLERN…CATLAREGAD (329 aa). H997 functions as the Proton acceptor; for dehydratase activity in the catalytic mechanism. A C-terminal hotdog fold region spans residues 1133–1293; that stretch reads RRNINVPQFY…CATLAREGAD (161 aa). D1198 functions as the Proton donor; for dehydratase activity in the catalytic mechanism. The segment at 1343-1645 is methyltransferase (CMeT) domain; sequence LERAAYYMLK…IATSINSNNY (303 aa). The Enoyl reductase (ER) domain occupies 1866–2178; it reads GLLDSIFWTD…TGGHMGKLVG (313 aa). The region spanning 2202 to 2379 is the Ketoreductase (KR) domain; the sequence is ASYVLIGGLG…ATTIDLGAIS (178 aa). Residues 2482–2559 form the Carrier domain; that stretch reads DASELILGAL…HLATKIAQRS (78 aa). Position 2519 is an O-(pantetheine 4'-phosphoryl)serine (S2519).

It depends on pantetheine 4'-phosphate as a cofactor.

Its pathway is secondary metabolite biosynthesis. Highly reducing polyketide synthase; part of the gene cluster that mediates the biosynthesis of the antihypercholesterolemic agents phomoidrides which are dimeric anhydrides. The pathway begins with the highly reducing polyketide synthase tstA that catalyzes the formation of a C12-fatty acyl-ACP, starting from one acetate and 5 malonate units. The hydrolase tstM is involved in the release of the C12-fatty acyl chain from tstA. The alkylcitrate synthase (ACS) tstJ and the alkylcitrate dehydratase (ACDH) tstI then give rise to decarboxylated monomeric anhydrides by coupling the C12-fatty acyl chain with oxalacetic acid. The cyclase tstC is responsible for the dimerization of the monomeric anhydrides which leads to the production of prephomoidride that contains the characteristic bicyclo[4.3.1]deca-1,6-diene system of phomoidrides. Iterative oxidation catalyzed by the alpha-ketoglutarate-dependent dioxygenase tstK produced then phomoidride A. Finally, the methyltransferase tstE converts phomoidride A to phomoidride B via an acetalization reaction. The phosphatidylethanolamine-binding protein tstB and tstN are not essential for dimerization and their functions have still to be determined. This chain is Highly reducing polyketide synthase tstA, found in Talaromyces stipitatus (strain ATCC 10500 / CBS 375.48 / QM 6759 / NRRL 1006) (Penicillium stipitatum).